A 971-amino-acid chain; its full sequence is Breast cancer type 2 susceptibility protein homolog (971 aa).

The segment covering 1 to 15 (MDQNGASGSHPNRLS) has biased composition (polar residues). Disordered stretches follow at residues 1 to 30 (MDQN…ATVS), 130 to 155 (SRKR…LSVQ), 349 to 395 (KLKL…DQPN), and 420 to 466 (MQCS…SSHQ). The span at 130–139 (SRKRDPKSHK) shows a compositional bias: basic residues. The span at 349–364 (KLKLEPSSQKEQKSSK) shows a compositional bias: basic and acidic residues. 3 stretches are compositionally biased toward polar residues: residues 375-392 (SKQS…TILD), 420-432 (MQCS…SKNA), and 453-466 (KQTP…SSHQ). BRCA2 repeat units lie at residues 570–604 (AEPE…EFQS), 671–705 (NESQ…QSKA), and 746–780 (SETE…EFQA). The disordered stretch occupies residues 916 to 971 (MERFAPKPSSTSTPLADRDLNRSKDCTKNRQDAEDMSPICMQPKKSRRLGLSRSRY). Basic and acidic residues predominate over residues 931–948 (ADRDLNRSKDCTKNRQDA). The span at 959-971 (KKSRRLGLSRSRY) shows a compositional bias: basic residues.

In terms of assembly, interacts with Rad9. Interacts with spn-A/Rad51. Interacts with cyclin CycG.

The protein localises to the nucleus. In terms of biological role, involved in and required for double-strand break repair by meiotic and mitotic homologous recombination. During meiosis, has a dual role in the repair of meiotic double-stranded breaks and the efficient activation of the meiotic recombination checkpoint. This chain is Breast cancer type 2 susceptibility protein homolog, found in Drosophila melanogaster (Fruit fly).